The chain runs to 356 residues: Peptide chain release factor 1 (356 aa).

Gln233 is subject to N5-methylglutamine.

The protein belongs to the prokaryotic/mitochondrial release factor family. Methylated by PrmC. Methylation increases the termination efficiency of RF1.

It localises to the cytoplasm. In terms of biological role, peptide chain release factor 1 directs the termination of translation in response to the peptide chain termination codons UAG and UAA. The polypeptide is Peptide chain release factor 1 (Bacillus licheniformis (strain ATCC 14580 / DSM 13 / JCM 2505 / CCUG 7422 / NBRC 12200 / NCIMB 9375 / NCTC 10341 / NRRL NRS-1264 / Gibson 46)).